The sequence spans 179 residues: ATP synthase subunit delta (179 aa).

The protein belongs to the ATPase delta chain family. In terms of assembly, F-type ATPases have 2 components, F(1) - the catalytic core - and F(0) - the membrane proton channel. F(1) has five subunits: alpha(3), beta(3), gamma(1), delta(1), epsilon(1). F(0) has three main subunits: a(1), b(2) and c(10-14). The alpha and beta chains form an alternating ring which encloses part of the gamma chain. F(1) is attached to F(0) by a central stalk formed by the gamma and epsilon chains, while a peripheral stalk is formed by the delta and b chains.

It localises to the cell inner membrane. In terms of biological role, f(1)F(0) ATP synthase produces ATP from ADP in the presence of a proton or sodium gradient. F-type ATPases consist of two structural domains, F(1) containing the extramembraneous catalytic core and F(0) containing the membrane proton channel, linked together by a central stalk and a peripheral stalk. During catalysis, ATP synthesis in the catalytic domain of F(1) is coupled via a rotary mechanism of the central stalk subunits to proton translocation. Functionally, this protein is part of the stalk that links CF(0) to CF(1). It either transmits conformational changes from CF(0) to CF(1) or is implicated in proton conduction. This is ATP synthase subunit delta from Anaeromyxobacter sp. (strain K).